The chain runs to 217 residues: Proteasome subunit beta type-9 (217 aa).

Residues 1–18 (MLDESLEPGWLSEEVKTG) constitute a propeptide, removed in mature form. Thr-19 functions as the Nucleophile in the catalytic mechanism.

It belongs to the peptidase T1B family. As to quaternary structure, the 26S proteasome consists of a 20S proteasome core and two 19S regulatory subunits. The 20S proteasome core is composed of 28 subunits that are arranged in four stacked rings, resulting in a barrel-shaped structure. The two end rings are each formed by seven alpha subunits, and the two central rings are each formed by seven beta subunits. The catalytic chamber with the active sites is on the inside of the barrel. Component of the immunoproteasome, where it displaces the equivalent housekeeping subunit PSMB6. Autocleaved. The resulting N-terminal Thr residue of the mature subunit is responsible for the nucleophile proteolytic activity.

The protein localises to the cytoplasm. It localises to the nucleus. It catalyses the reaction Cleavage of peptide bonds with very broad specificity.. The proteasome is a multicatalytic proteinase complex which is characterized by its ability to cleave peptides with Arg, Phe, Tyr, Leu, and Glu adjacent to the leaving group at neutral or slightly basic pH. The proteasome has an ATP-dependent proteolytic activity. This subunit is involved in antigen processing to generate class I binding peptides. This chain is Proteasome subunit beta type-9 (psmb9), found in Oncorhynchus mykiss (Rainbow trout).